The following is a 478-amino-acid chain: Leukotoxin secretion protein D (478 aa).

The Cytoplasmic portion of the chain corresponds to Met-1–Val-77. The helical transmembrane segment at Ser-78–Glu-98 threads the bilayer. Residues Ile-99–Arg-478 lie on the Periplasmic side of the membrane.

The protein belongs to the membrane fusion protein (MFP) (TC 8.A.1) family.

It localises to the cell inner membrane. Its function is as follows. Involved in the transport of the Leukotoxin. The protein is Leukotoxin secretion protein D (lktD) of Pasteurella haemolytica-like sp. (strain 5943B).